Reading from the N-terminus, the 310-residue chain is Solute carrier family 25 member 47 (310 aa).

Solcar repeat units lie at residues 1–80 (MDFV…CLAH), 93–208 (PTKA…LSEW), and 217–304 (PDVL…VLRL). A run of 6 helical transmembrane segments spans residues 3–23 (FVAG…LDTV), 49–69 (LWGF…VSSV), 98–116 (ITLS…TSPT), 192–212 (GHSF…LTPA), 219–239 (VLGV…VATP), and 275–295 (VLFK…MVVF).

It belongs to the mitochondrial carrier (TC 2.A.29) family.

The protein localises to the mitochondrion inner membrane. The protein resides in the mitochondrion outer membrane. It carries out the reaction NAD(+)(in) = NAD(+)(out). The catalysed reaction is acetyl-CoA(in) = acetyl-CoA(out). In terms of biological role, mitochondrial NAD(+) transporter that acts as a 'metabolic gate' in hepatic lipogenesis. Provides NAD(+) substrate to mitochondrial SIRT3 deacetylase and enables its NAD(+)-dependent activities in mitochondrial energy metabolism. This triggers downstream activation of PRKAA1/AMPK-alpha signaling cascade that negatively regulates sterol regulatory element-binding protein (SREBP) transcriptional activities and ATP-consuming lipogenesis to restore cellular energy balance. May transport other mitochondrial metabolites having an aromatic nucleotide and phosphate groups, such as acetyl-CoA. Does not transport amino acids. The transport mechanism remains to be elucidated. This Rattus norvegicus (Rat) protein is Solute carrier family 25 member 47.